The primary structure comprises 346 residues: Fructose-1,6-bisphosphatase class 1 (346 aa).

Residues glutamate 96, aspartate 119, leucine 121, and aspartate 122 each contribute to the Mg(2+) site. Substrate-binding positions include 122-125 (DGSS), asparagine 214, tyrosine 247, and lysine 277. A Mg(2+)-binding site is contributed by glutamate 283.

Belongs to the FBPase class 1 family. As to quaternary structure, homotetramer. Requires Mg(2+) as cofactor.

It is found in the cytoplasm. The enzyme catalyses beta-D-fructose 1,6-bisphosphate + H2O = beta-D-fructose 6-phosphate + phosphate. It functions in the pathway carbohydrate biosynthesis; gluconeogenesis. The sequence is that of Fructose-1,6-bisphosphatase class 1 from Cytophaga hutchinsonii (strain ATCC 33406 / DSM 1761 / CIP 103989 / NBRC 15051 / NCIMB 9469 / D465).